Consider the following 278-residue polypeptide: Release factor glutamine methyltransferase (278 aa).

Residues glycine 116 to glycine 120, aspartate 139, tryptophan 168, and asparagine 182 each bind S-adenosyl-L-methionine. Residue asparagine 182–tyrosine 185 participates in substrate binding.

This sequence belongs to the protein N5-glutamine methyltransferase family. PrmC subfamily.

The catalysed reaction is L-glutaminyl-[peptide chain release factor] + S-adenosyl-L-methionine = N(5)-methyl-L-glutaminyl-[peptide chain release factor] + S-adenosyl-L-homocysteine + H(+). Methylates the class 1 translation termination release factors RF1/PrfA and RF2/PrfB on the glutamine residue of the universally conserved GGQ motif. The chain is Release factor glutamine methyltransferase from Cereibacter sphaeroides (strain ATCC 17023 / DSM 158 / JCM 6121 / CCUG 31486 / LMG 2827 / NBRC 12203 / NCIMB 8253 / ATH 2.4.1.) (Rhodobacter sphaeroides).